The chain runs to 1619 residues: ATP-dependent helicase ULS1 (1619 aa).

The SUMO interacting motif; type a 1 motif lies at 7-10; the sequence is IDLT. Residues 86–102 are compositionally biased toward polar residues; sequence STFNNEKSSNEVKQQQV. 4 disordered regions span residues 86-123, 200-279, 347-371, and 429-450; these read STFN…SSPS, NNKP…VESS, PILP…NSSI, and SGSN…SVLQ. A compositionally biased stretch (basic and acidic residues) spans 103-118; sequence LKEETMGSSNDEKKTQ. At serine 121 the chain carries Phosphoserine. Residues 200–210 show a composition bias toward polar residues; the sequence is NNKPSQQQFSD. Residues 211–226 show a composition bias toward basic and acidic residues; sequence PETKDNSLKSENKDQI. 2 stretches are compositionally biased toward polar residues: residues 242 to 259 and 269 to 279; these read SAFQ…TIPN and LPSNLSSVESS. Positions 353 to 366 are enriched in basic and acidic residues; the sequence is NMDHTTHNSHDSEQ. The short motif at 371-378 is the SUMO interacting motif; type b 1 element; sequence IIILSDED. Residues 470-473 carry the SUMO interacting motif; type a 2 motif; that stretch reads LDTL. Residues 543–550 carry the SUMO interacting motif; type b 2 motif; it reads ILVDEAEN. The Helicase ATP-binding domain occupies 956–1157; it reads QVENSAKKGG…YSLIRFLRIP (202 aa). 969-976 contacts ATP; that stretch reads DDMGLGKT. The segment at 1330-1386 adopts an RING-type zinc-finger fold; it reads CFWCMEQLEPEAMSVLTGCGHLICDTCIEPFIEESSMLPQAKKTKGGAFAIPCKDCQ. A Helicase C-terminal domain is found at 1447 to 1606; it reads QCIQVIQRVF…GKIKEVNSLG (160 aa).

The protein belongs to the SNF2/RAD54 helicase family. As to quaternary structure, interacts with CDC3, CDC11, EBP2, SIR4, UBC4 and SUMO/SMT3.

Its subcellular location is the nucleus. Its function is as follows. ATP-dependent helicase involved mating type switching and in silencing interference through its interaction with the silencing regulator SIR4. Cooperates with UBC4 and UBC5 to mediate ubiquitination of SUMO conjugates. This chain is ATP-dependent helicase ULS1 (ULS1), found in Saccharomyces cerevisiae (strain ATCC 204508 / S288c) (Baker's yeast).